Consider the following 674-residue polypeptide: Phosphopantothenoylcysteine decarboxylase subunit VHS3 (674 aa).

Disordered regions lie at residues 1-164, 190-230, 348-368, 384-426, and 575-674; these read MTNK…SILS, LNSD…RPSV, QHNS…NITG, TSSN…SNVV, and VSAG…LQRS. The span at 15–81 shows a compositional bias: polar residues; it reads ASNTLSGAEQ…TSGAVVSNTP (67 aa). Thr-90 carries the post-translational modification Phosphothreonine. The span at 106 to 116 shows a compositional bias: polar residues; the sequence is EQTPPNQVARQ. Residues 137-150 show a composition bias toward basic and acidic residues; that stretch reads NLKDINTKVPKDGE. Positions 152–164 are enriched in polar residues; the sequence is SASSFSTPTSILS. Basic and acidic residues predominate over residues 198 to 212; the sequence is SPRKEHPHFYVEDPL. A compositionally biased stretch (low complexity) spans 214–230; sequence TPSVRSRSNSTSPRPSV. The span at 351-368 shows a compositional bias: polar residues; sequence SIDTSFNSTNSNAGNITG. Low complexity predominate over residues 384-395; sequence TSSNSAASQTNN. The span at 403 to 426 shows a compositional bias: polar residues; the sequence is MASTTGFPSTLGGSRTYSNSSNVV. Residues 580–591 are compositionally biased toward acidic residues; it reads EEEEDEDNDEED. The segment covering 592-602 has biased composition (basic and acidic residues); the sequence is DNKKNDTGGKD. Residues 603–660 are compositionally biased toward acidic residues; that stretch reads EDNDDDDDDDDDDDDDDDDDDDDDDDDDDDDDDDDDDDDDDDDDDDDDEDDEDEDEDD. The span at 661–674 shows a compositional bias: basic and acidic residues; the sequence is EGKKKEDKGGLQRS.

It belongs to the HFCD (homooligomeric flavin containing Cys decarboxylase) superfamily. As to quaternary structure, interacts with the C-terminal domain of PPZ1. Component of the phosphopantothenoylcysteine decarboxylase (PPCDC) complex, a heterotrimer composed of CAB3, SIS2 and VHS3.

In terms of biological role, component of the phosphopantothenoylcysteine decarboxylase (PPCDC) involved in the coenzyme A synthesis. Acts as an inhibitory subunit of protein phosphatase PPZ1, which is involved in many cellular processes such as G1-S transition or salt tolerance. This is Phosphopantothenoylcysteine decarboxylase subunit VHS3 (VHS3) from Saccharomyces cerevisiae (strain ATCC 204508 / S288c) (Baker's yeast).